Here is a 187-residue protein sequence, read N- to C-terminus: Signal peptidase complex catalytic subunit SEC11 (187 aa).

Topologically, residues 1–18 (MLSSLSPYMANPRNTLSQ) are cytoplasmic. The chain crosses the membrane as a helical; Signal-anchor for type II membrane protein span at residues 19–39 (VLNFGLVLSSAFMVWKALSVI). Topologically, residues 40–187 (TNSASPVVVV…MGLMVMLQRE (148 aa)) are lumenal. Active-site charge relay system residues include Ser-53 and His-92. Asn-125 is a glycosylation site (N-linked (GlcNAc...) asparagine). Asp-129 functions as the Charge relay system in the catalytic mechanism. Residues 173-184 (VLLGFMGLMVML) form a C-terminal short (CTS) helix region.

The protein belongs to the peptidase S26B family. Component of the signal peptidase complex (SPC) composed of a catalytic subunit SEC11 and three accessory subunits SPC1, SPC2 and SPC3. The complex induces a local thinning of the ER membrane which is used to measure the length of the signal peptide (SP) h-region of protein substrates. This ensures the selectivity of the complex towards h-regions shorter than 18-20 amino acids. SPC associates with the translocon complex.

It is found in the endoplasmic reticulum membrane. It carries out the reaction Cleavage of hydrophobic, N-terminal signal or leader sequences from secreted and periplasmic proteins.. Its function is as follows. Catalytic component of the signal peptidase complex (SPC) which catalyzes the cleavage of N-terminal signal sequences from nascent proteins as they are translocated into the lumen of the endoplasmic reticulum. Specifically cleaves N-terminal signal peptides that contain a hydrophobic alpha-helix (h-region) shorter than 18-20 amino acids. The polypeptide is Signal peptidase complex catalytic subunit SEC11 (SEC11) (Ajellomyces capsulatus (strain G186AR / H82 / ATCC MYA-2454 / RMSCC 2432) (Darling's disease fungus)).